We begin with the raw amino-acid sequence, 296 residues long: Methylsterol monooxygenase 1 (296 aa).

2 consecutive transmembrane segments (helical) span residues 55-75 (LLVH…FQFI) and 100-120 (TLIF…YYFT). The region spanning 145-274 (CAVIEDAWHY…FTWWDRIFGT (130 aa)) is the Fatty acid hydroxylase domain. The Histidine box-1 signature appears at 157 to 161 (HRLLH). Residues 170-174 (HKVHH) carry the Histidine box-2 motif. A helical transmembrane segment spans residues 199–219 (FFIGIVVFCNHVVLLWAWVIC). Positions 249-255 (FHDFHHM) match the Histidine box-3 motif.

Belongs to the sterol desaturase family. It depends on Fe cation as a cofactor.

Its subcellular location is the endoplasmic reticulum membrane. The enzyme catalyses 4,4-dimethyl-5alpha-cholest-7-en-3beta-ol + 6 Fe(II)-[cytochrome b5] + 3 O2 + 5 H(+) = 4alpha-carboxy-4beta-methyl-5alpha-cholest-7-ene-3beta-ol + 6 Fe(III)-[cytochrome b5] + 4 H2O. Its pathway is steroid biosynthesis; zymosterol biosynthesis; zymosterol from lanosterol: step 3/6. Its function is as follows. Catalyzes the first step in the removal of the two C-4 methyl groups of 4,4-dimethylzymosterol. The polypeptide is Methylsterol monooxygenase 1 (MSMO1) (Gallus gallus (Chicken)).